Consider the following 347-residue polypeptide: N-acetyl-gamma-glutamyl-phosphate reductase (347 aa).

Cysteine 155 is a catalytic residue.

This sequence belongs to the NAGSA dehydrogenase family. Type 1 subfamily.

The protein localises to the cytoplasm. It catalyses the reaction N-acetyl-L-glutamate 5-semialdehyde + phosphate + NADP(+) = N-acetyl-L-glutamyl 5-phosphate + NADPH + H(+). The protein operates within amino-acid biosynthesis; L-arginine biosynthesis; N(2)-acetyl-L-ornithine from L-glutamate: step 3/4. Its function is as follows. Catalyzes the NADPH-dependent reduction of N-acetyl-5-glutamyl phosphate to yield N-acetyl-L-glutamate 5-semialdehyde. The polypeptide is N-acetyl-gamma-glutamyl-phosphate reductase (Akkermansia muciniphila (strain ATCC BAA-835 / DSM 22959 / JCM 33894 / BCRC 81048 / CCUG 64013 / CIP 107961 / Muc)).